A 584-amino-acid chain; its full sequence is Potassium-transporting ATPase potassium-binding subunit (584 aa).

Helical transmembrane passes span 8–28 (FLVLIGVILALLLIPTGEFMF), 65–85 (SFAVAMMIFSVIGIVFVFILQ), 139–159 (VQNFMSAAVGMVVLVAFIYGF), 172–192 (VLLLRSIWILLPLSFVIALVL), 262–282 (FTDLVEIVAILLIPVSLCFMF), 292–312 (GIAILIAMMILFVPLLGLGIW), 398–418 (GLYCMLVFVIIAMFIAGLMVG), 440–460 (ILIPIFLILIGTAIAVSITAG), 507–527 (MFVGRYAIAIITLALAGAFVA), and 544–564 (LFIIWVVFTILIIGALSFLPA).

It belongs to the KdpA family. In terms of assembly, the system is composed of three essential subunits: KdpA, KdpB and KdpC.

The protein resides in the cell membrane. Its function is as follows. Part of the high-affinity ATP-driven potassium transport (or Kdp) system, which catalyzes the hydrolysis of ATP coupled with the electrogenic transport of potassium into the cytoplasm. This subunit binds the extracellular potassium ions and delivers the ions to the membrane domain of KdpB through an intramembrane tunnel. The polypeptide is Potassium-transporting ATPase potassium-binding subunit (Methanoregula boonei (strain DSM 21154 / JCM 14090 / 6A8)).